The following is a 439-amino-acid chain: Taxadien-5-alpha-ol O-acetyltransferase (439 aa).

Residues H164 and D373 each act as proton acceptor in the active site.

The protein belongs to the plant acyltransferase family.

It catalyses the reaction taxa-4(20),11-dien-5alpha-ol + acetyl-CoA = taxa-4(20),11-dien-5alpha-yl acetate + CoA. It participates in alkaloid biosynthesis; taxol biosynthesis; 10-deacetyl-2-debenzoylbaccatin III from taxa-4(20),11-dien-5alpha-ol: step 1/3. This Taxus chinensis (Chinese yew) protein is Taxadien-5-alpha-ol O-acetyltransferase.